The primary structure comprises 466 residues: Putative multidrug resistance protein MdtD (466 aa).

14 helical membrane-spanning segments follow: residues 11–31 (LWIVAFGFFMQTLDTTIVNTA), 48–68 (SVIVSYVLTVAVMLPASGWLA), 71–91 (IGVKNIFFAAILLFTLGSLLC), 105–125 (VIQGIGGAMMVPVGRLTVMKI), 137–157 (FVTLPGQIGPLMGPALGGFLV), 164–184 (WIFLINLPVGIIGALATWFLM), 194–214 (FDISGFLWLAVGMATLTLALD), 218–238 (SLGIPPIAIFALITVGLIALL), 262–282 (FSIGLTGGLLARIGSGMLPFM), 286–306 (FLQLGMGFSPFHAGLMMVPMV), 328–347 (VLIVSTLLLALVTALFALVA), 351–370 (WIWMIPIVLFFLGMVNAIRF), 403–423 (LGVSIAGILLGMFSQPHMAAG), and 429–449 (MVFIYTYLSMIVIIALPALIF).

This sequence belongs to the major facilitator superfamily. TCR/Tet family.

It is found in the cell inner membrane. This is Putative multidrug resistance protein MdtD from Pectobacterium carotovorum subsp. carotovorum (strain PC1).